The primary structure comprises 202 residues: Lipoprotein signal peptidase (202 aa).

The segment at 1 to 29 is disordered; that stretch reads MPDEPTGSADPLTSTEEAGGAGEPNAPAP. The next 3 membrane-spanning stretches (helical) occupy residues 35 to 55, 88 to 108, and 112 to 132; these read MLLS…VVAV, GYTW…FWMG, and VSPW…GNLV. Catalysis depends on residues aspartate 148 and aspartate 162. The helical transmembrane segment at 160–180 threads the bilayer; it reads VADPSVVGGAILLVILSIFGF.

It belongs to the peptidase A8 family.

The protein localises to the cell membrane. The catalysed reaction is Release of signal peptides from bacterial membrane prolipoproteins. Hydrolyzes -Xaa-Yaa-Zaa-|-(S,diacylglyceryl)Cys-, in which Xaa is hydrophobic (preferably Leu), and Yaa (Ala or Ser) and Zaa (Gly or Ala) have small, neutral side chains.. The protein operates within protein modification; lipoprotein biosynthesis (signal peptide cleavage). In terms of biological role, this protein specifically catalyzes the removal of signal peptides from prolipoproteins. This is Lipoprotein signal peptidase from Mycobacterium bovis (strain ATCC BAA-935 / AF2122/97).